We begin with the raw amino-acid sequence, 801 residues long: Conserved oligomeric Golgi complex subunit 4 (801 aa).

The interval 397-427 is disordered; sequence IRSPSGDGDDEENEEARQERHRLRKEAKEQK.

The protein belongs to the COG4 family. As to quaternary structure, component of the conserved oligomeric Golgi complex which is composed of eight different subunits and is required for normal Golgi morphology and localization.

It is found in the golgi apparatus membrane. Its function is as follows. Required for normal Golgi function. The sequence is that of Conserved oligomeric Golgi complex subunit 4 (cogc-4) from Caenorhabditis elegans.